Here is a 318-residue protein sequence, read N- to C-terminus: 2-keto-3-deoxygluconate permease (318 aa).

Helical transmembrane passes span 10–30 (IPGG…TFTP), 42–62 (GLIT…GASI), 76–96 (VLVI…GTFL), 105–125 (LLAG…NGGL), 139–159 (AGAF…VILG), 162–182 (GIAT…LIGF), 199–219 (VQTL…LAVI), 224–244 (FAGI…LIIA), 263–283 (AGAA…FAPV), and 289–309 (ALVA…TALW).

This sequence belongs to the KdgT transporter family.

The protein resides in the cell inner membrane. It catalyses the reaction 2-dehydro-3-deoxy-D-gluconate(in) + H(+)(in) = 2-dehydro-3-deoxy-D-gluconate(out) + H(+)(out). Catalyzes the proton-dependent uptake of 2-keto-3-deoxygluconate (KDG) into the cell. This chain is 2-keto-3-deoxygluconate permease, found in Pectobacterium carotovorum subsp. carotovorum (strain PC1).